A 718-amino-acid chain; its full sequence is Exostosin-2 (718 aa).

Residues 1 to 25 (MCASVKYNIRGPALIPRMKTKHRIY) lie on the Cytoplasmic side of the membrane. A helical; Signal-anchor for type II membrane protein membrane pass occupies residues 26–46 (YITLFSIVLLGLIATGMFQFW). Residues 47–718 (PHSIESSNDW…LKSFPNIGSL (672 aa)) lie on the Lumenal side of the membrane. Intrachain disulfides connect cysteine 85–cysteine 90, cysteine 96–cysteine 151, cysteine 286–cysteine 300, and cysteine 318–cysteine 339. Asparagine 288 carries an N-linked (GlcNAc...) asparagine glycan. Positions 461, 465, 490, and 517 each coordinate UDP. Residues arginine 465, asparagine 490, asparagine 517, arginine 522, aspartate 538, aspartate 539, and aspartate 540 each contribute to the UDP-N-acetyl-alpha-D-glucosamine site. Residues aspartate 538 and aspartate 539 each contribute to the UDP site. Aspartate 540 lines the Mn(2+) pocket. Tyrosine 582 and serine 584 together coordinate a protein. Cysteine 626 and cysteine 676 form a disulfide bridge. Glutamate 627 and aspartate 628 together coordinate UDP-N-acetyl-alpha-D-glucosamine. N-linked (GlcNAc...) asparagine glycosylation is present at asparagine 637. 2 residues coordinate a protein: lysine 651 and lysine 653. Arginine 673 provides a ligand contact to UDP-N-acetyl-alpha-D-glucosamine.

This sequence belongs to the glycosyltransferase 47 family. Part of the heparan sulfate polymerase, a dimeric complex composed of EXT1 and EXT2. Could also form homooligomeric complexes. Interacts with NDST1. Interacts with GALNT5. Mn(2+) serves as cofactor. In terms of processing, N-glycosylated at Asn-637. A soluble form is generated by proteolytic processing. In terms of tissue distribution, widely expressed.

Its subcellular location is the golgi apparatus membrane. It localises to the golgi apparatus. The protein resides in the cis-Golgi network membrane. It is found in the endoplasmic reticulum membrane. The protein localises to the secreted. The catalysed reaction is 3-O-{[(1-&gt;4)-beta-D-GlcA-(1-&gt;4)-alpha-D-GlcNAc](n)-(1-&gt;4)-beta-D-GlcA-(1-&gt;3)-beta-D-Gal-(1-&gt;3)-beta-D-Gal-(1-&gt;4)-beta-D-Xyl}-L-seryl-[protein] + UDP-N-acetyl-alpha-D-glucosamine = 3-O-{alpha-D-GlcNAc-[(1-&gt;4)-beta-D-GlcA-(1-&gt;4)-alpha-D-GlcNAc](n)-(1-&gt;4)-beta-D-GlcA-(1-&gt;3)-beta-D-Gal-(1-&gt;3)-beta-D-Gal-(1-&gt;4)-beta-D-Xyl}-L-seryl-[protein] + UDP + H(+). The protein operates within protein modification; protein glycosylation. In terms of biological role, glycosyltransferase forming with EXT1 the heterodimeric heparan sulfate polymerase which catalyzes the elongation of the heparan sulfate glycan backbone. Glycan backbone extension consists in the alternating transfer of (1-&gt;4)-beta-D-GlcA and (1-&gt;4)-alpha-D-GlcNAc residues from their respective UDP-sugar donors. Both EXT1 and EXT2 are required for the full activity of the polymerase since EXT1 bears the N-acetylglucosaminyl-proteoglycan 4-beta-glucuronosyltransferase activity within the complex while EXT2 carries the glucuronosyl-N-acetylglucosaminyl-proteoglycan 4-alpha-N-acetylglucosaminyltransferase activity. Heparan sulfate proteoglycans are ubiquitous components of the extracellular matrix and play an important role in tissue homeostasis and signaling. This chain is Exostosin-2, found in Homo sapiens (Human).